Consider the following 786-residue polypeptide: Endonuclease MutS2 (786 aa).

332-339 (GPNTGGKT) is an ATP binding site. One can recognise a Smr domain in the interval 711 to 786 (IDLRGMDSEE…GTGVTVVILK (76 aa)).

Belongs to the DNA mismatch repair MutS family. MutS2 subfamily. As to quaternary structure, homodimer. Binds to stalled ribosomes, contacting rRNA.

In terms of biological role, endonuclease that is involved in the suppression of homologous recombination and thus may have a key role in the control of bacterial genetic diversity. Its function is as follows. Acts as a ribosome collision sensor, splitting the ribosome into its 2 subunits. Detects stalled/collided 70S ribosomes which it binds and splits by an ATP-hydrolysis driven conformational change. Acts upstream of the ribosome quality control system (RQC), a ribosome-associated complex that mediates the extraction of incompletely synthesized nascent chains from stalled ribosomes and their subsequent degradation. Probably generates substrates for RQC. The sequence is that of Endonuclease MutS2 from Clostridium perfringens (strain ATCC 13124 / DSM 756 / JCM 1290 / NCIMB 6125 / NCTC 8237 / Type A).